Reading from the N-terminus, the 139-residue chain is NAD(P) transhydrogenase subunit alpha part 2 (139 aa).

Helical transmembrane passes span 49–69 (FWWL…VVWS), 78–98 (LMGV…IATG), and 107–127 (VLGF…FIVT).

In terms of assembly, complex of an alpha and a beta chain; in Rhodospirillum, the alpha chain seems to be made of two subunits.

It is found in the cell inner membrane. It catalyses the reaction NAD(+) + NADPH + H(+)(in) = NADH + NADP(+) + H(+)(out). Its function is as follows. The transhydrogenation between NADH and NADP is coupled to respiration and ATP hydrolysis and functions as a proton pump across the membrane. This chain is NAD(P) transhydrogenase subunit alpha part 2 (pntAB), found in Rhodospirillum rubrum (strain ATCC 11170 / ATH 1.1.1 / DSM 467 / LMG 4362 / NCIMB 8255 / S1).